The sequence spans 1390 residues: DNA-directed RNA polymerase subunit beta'' (1390 aa).

The Zn(2+) site is built by Cys220, Cys291, Cys298, and Cys301.

Belongs to the RNA polymerase beta' chain family. RpoC2 subfamily. As to quaternary structure, in plastids the minimal PEP RNA polymerase catalytic core is composed of four subunits: alpha, beta, beta', and beta''. When a (nuclear-encoded) sigma factor is associated with the core the holoenzyme is formed, which can initiate transcription. Requires Zn(2+) as cofactor.

The protein localises to the plastid. Its subcellular location is the chloroplast. It carries out the reaction RNA(n) + a ribonucleoside 5'-triphosphate = RNA(n+1) + diphosphate. Functionally, DNA-dependent RNA polymerase catalyzes the transcription of DNA into RNA using the four ribonucleoside triphosphates as substrates. The protein is DNA-directed RNA polymerase subunit beta'' of Populus alba (White poplar).